We begin with the raw amino-acid sequence, 980 residues long: Peroxisomal ATPase PEX6 (980 aa).

Arginine 119 bears the Omega-N-methylarginine mark. ATP-binding positions include glycine 470–threonine 477 and glycine 744–threonine 751.

Belongs to the AAA ATPase family. Interacts with PEX1; forming the PEX1-PEX6 AAA ATPase complex, which is composed of a heterohexamer formed by a trimer of PEX1-PEX6 dimers. Interacts with PEX26; interaction is direct and promotes recruitment to peroxisomal membranes. Interacts with ZFAND6.

Its subcellular location is the cytoplasm. It is found in the cytosol. The protein resides in the peroxisome membrane. The protein localises to the cell projection. It localises to the cilium. Its subcellular location is the photoreceptor outer segment. The catalysed reaction is ATP + H2O = ADP + phosphate + H(+). Functionally, component of the PEX1-PEX6 AAA ATPase complex, a protein dislocase complex that mediates the ATP-dependent extraction of the PEX5 receptor from peroxisomal membranes, an essential step for PEX5 recycling. Specifically recognizes PEX5 monoubiquitinated at 'Cys-11', and pulls it out of the peroxisome lumen through the PEX2-PEX10-PEX12 retrotranslocation channel. Extraction by the PEX1-PEX6 AAA ATPase complex is accompanied by unfolding of the TPR repeats and release of bound cargo from PEX5. The polypeptide is Peroxisomal ATPase PEX6 (Cricetulus griseus (Chinese hamster)).